Reading from the N-terminus, the 314-residue chain is Probable carboxylesterase 2 (314 aa).

Positions 79–81 (HGG) match the Involved in the stabilization of the negatively charged intermediate by the formation of the oxyanion hole motif. Residues Ser-158, Asp-254, and His-286 contribute to the active site.

Belongs to the 'GDXG' lipolytic enzyme family. As to expression, expressed in roots and flowers.

The catalysed reaction is a carboxylic ester + H2O = an alcohol + a carboxylate + H(+). Functionally, carboxylesterase acting on esters with varying acyl chain length. This chain is Probable carboxylesterase 2 (CXE2), found in Arabidopsis thaliana (Mouse-ear cress).